A 410-amino-acid chain; its full sequence is Scarecrow-like protein 32 (410 aa).

The region spanning 18-408 is the GRAS domain; the sequence is LRGCGDANFM…HSVVFATVWV (391 aa). The leucine repeat I (LRI) stretch occupies residues 25–88; that stretch reads NFMEQLLLHC…AVSKTPTLSS (64 aa). Residues 107–188 are VHIID; that stretch reads LAAFVDLTPW…HFPPFINISY (82 aa). Positions 138–142 match the VHIID motif; sequence VHIVD. The segment at 190 to 227 is leucine repeat II (LRII); the sequence is ELGSKLVNFATTRNITMEFTIVPSTYSDGFSSLLQQLR. Residues 237–329 form a PFYRE region; that stretch reads LVVNCHMMLR…EAEISWKIEN (93 aa). The segment at 332-408 is SAW; the sequence is AKEGAERVER…HSVVFATVWV (77 aa).

This sequence belongs to the GRAS family. As to expression, expressed in seedlings, leaves and flowers.

It is found in the nucleus. In terms of biological role, probable transcription factor involved in plant development. The polypeptide is Scarecrow-like protein 32 (SCL32) (Arabidopsis thaliana (Mouse-ear cress)).